Consider the following 418-residue polypeptide: Glutamate-1-semialdehyde 2,1-aminomutase (418 aa).

Lys262 carries the post-translational modification N6-(pyridoxal phosphate)lysine.

The protein belongs to the class-III pyridoxal-phosphate-dependent aminotransferase family. HemL subfamily. Requires pyridoxal 5'-phosphate as cofactor.

It localises to the cytoplasm. It carries out the reaction (S)-4-amino-5-oxopentanoate = 5-aminolevulinate. Its pathway is porphyrin-containing compound metabolism; protoporphyrin-IX biosynthesis; 5-aminolevulinate from L-glutamyl-tRNA(Glu): step 2/2. This chain is Glutamate-1-semialdehyde 2,1-aminomutase (hemL), found in Archaeoglobus fulgidus (strain ATCC 49558 / DSM 4304 / JCM 9628 / NBRC 100126 / VC-16).